Reading from the N-terminus, the 106-residue chain is Thiosulfate sulfurtransferase GlpE (106 aa).

One can recognise a Rhodanese domain in the interval 17 to 105; it reads QLPSVCLADI…WRHVYPYTAT (89 aa). Cys-65 (cysteine persulfide intermediate) is an active-site residue.

It belongs to the GlpE family.

It is found in the cytoplasm. The enzyme catalyses thiosulfate + hydrogen cyanide = thiocyanate + sulfite + 2 H(+). It carries out the reaction thiosulfate + [thioredoxin]-dithiol = [thioredoxin]-disulfide + hydrogen sulfide + sulfite + 2 H(+). Transferase that catalyzes the transfer of sulfur from thiosulfate to thiophilic acceptors such as cyanide or dithiols. May function in a CysM-independent thiosulfate assimilation pathway by catalyzing the conversion of thiosulfate to sulfite, which can then be used for L-cysteine biosynthesis. This Tolumonas auensis (strain DSM 9187 / NBRC 110442 / TA 4) protein is Thiosulfate sulfurtransferase GlpE.